Here is a 177-residue protein sequence, read N- to C-terminus: Ribulose bisphosphate carboxylase small subunit, chloroplastic 3 (177 aa).

Residues 1–56 (MASSMMASTAAAVARAGPAQSSMVPFNACRSSVPFPATRKANNNLSTLPGNGGRVS) constitute a chloroplast transit peptide.

Belongs to the RuBisCO small chain family. As to quaternary structure, heterohexadecamer of 8 large and 8 small subunits.

It is found in the plastid. The protein resides in the chloroplast. Its function is as follows. RuBisCO catalyzes two reactions: the carboxylation of D-ribulose 1,5-bisphosphate, the primary event in carbon dioxide fixation, as well as the oxidative fragmentation of the pentose substrate. Both reactions occur simultaneously and in competition at the same active site. Although the small subunit is not catalytic it is essential for maximal activity. The polypeptide is Ribulose bisphosphate carboxylase small subunit, chloroplastic 3 (Lemna gibba (Swollen duckweed)).